The sequence spans 421 residues: Phosphoglycerate kinase (421 aa).

Residues Val-23, Asp-24, Phe-25, Asn-26, Gln-41, Arg-42, Ser-65, His-66, Gly-68, Arg-69, Leu-124, Arg-125, His-172, and Arg-173 each contribute to the (2R)-3-phosphoglycerate site. Gly-216 contacts ADP. Gly-216 provides a ligand contact to CDP. Lys-218 provides a ligand contact to AMP. CDP is bound at residue Asp-221. Residue Asp-221 participates in Mg(2+) binding. Lys-222 lines the AMP pocket. Lys-222 contacts ATP. Gly-240 contributes to the ADP binding site. Position 240 (Gly-240) interacts with CDP. Residues Gly-241 and Gly-315 each coordinate AMP. 2 residues coordinate ATP: Gly-241 and Gly-315. CDP contacts are provided by Gly-340 and Phe-345. Residue Phe-345 participates in ADP binding. An AMP-binding site is contributed by Glu-346. ATP contacts are provided by Glu-346, Asp-377, and Thr-378. Asp-377 is a Mg(2+) binding site.

Belongs to the phosphoglycerate kinase family. Monomer. The cofactor is Mg(2+).

Its subcellular location is the cytoplasm. It localises to the mitochondrion. It catalyses the reaction (2R)-3-phosphoglycerate + ATP = (2R)-3-phospho-glyceroyl phosphate + ADP. The protein operates within carbohydrate degradation; glycolysis; pyruvate from D-glyceraldehyde 3-phosphate: step 2/5. Catalyzes one of the two ATP producing reactions in the glycolytic pathway via the reversible conversion of 1,3-diphosphoglycerate to 3-phosphoglycerate. Both L- and D- forms of purine and pyrimidine nucleotides can be used as substrates, but the activity is much lower on pyrimidines. Negatively regulates the biosynthesis of acetyl-CoA from pyruvate in the mitochondrion. This is Phosphoglycerate kinase (pgkA) from Emericella nidulans (strain FGSC A4 / ATCC 38163 / CBS 112.46 / NRRL 194 / M139) (Aspergillus nidulans).